The chain runs to 250 residues: Octanoyltransferase (250 aa).

The BPL/LPL catalytic domain maps to 49–230 (DEINDVILVL…ALDDAFAGRL (182 aa)). Substrate is bound by residues 87-94 (RGGRITWH), 160-162 (ALG), and 173-175 (GLA). The active-site Acyl-thioester intermediate is the cysteine 191.

This sequence belongs to the LipB family.

It is found in the cytoplasm. The enzyme catalyses octanoyl-[ACP] + L-lysyl-[protein] = N(6)-octanoyl-L-lysyl-[protein] + holo-[ACP] + H(+). It participates in protein modification; protein lipoylation via endogenous pathway; protein N(6)-(lipoyl)lysine from octanoyl-[acyl-carrier-protein]: step 1/2. Catalyzes the transfer of endogenously produced octanoic acid from octanoyl-acyl-carrier-protein onto the lipoyl domains of lipoate-dependent enzymes. Lipoyl-ACP can also act as a substrate although octanoyl-ACP is likely to be the physiological substrate. This chain is Octanoyltransferase, found in Corynebacterium diphtheriae (strain ATCC 700971 / NCTC 13129 / Biotype gravis).